The sequence spans 254 residues: MMIKYITIAILFIASLVKADLQFSLCPTCVDFINNDMGDLEKIISGGIATSCGAVCSLLPNNIEQGACNLLCDIVGIDEFLKVFNNIGEDADPVWICEELTVCPKNQNSNATVLTSDVSPASGPHGTTFTIGVAYKVESTLGTGEVAVMVTDPTGSNGFGDAQLIVNTQPGQYSTSFSFAATPSEDEQFPAGVYQVQLMICEGSCGAKHSVTFNSVYANFTVTSGPSVTGQMTGTGSGSGSGSGSSSGAAYLRY.

Positions 1 to 19 (MMIKYITIAILFIASLVKA) are cleaved as a signal peptide. The Saposin B-type domain maps to 22 to 107 (QFSLCPTCVD…EELTVCPKNQ (86 aa)). Cystine bridges form between Cys-26/Cys-103, Cys-29/Cys-97, and Cys-56/Cys-68. Residues Asn-110 and Asn-219 are each glycosylated (N-linked (GlcNAc...) asparagine). The disordered stretch occupies residues 231 to 254 (QMTGTGSGSGSGSGSSSGAAYLRY). The span at 233–245 (TGTGSGSGSGSGS) shows a compositional bias: gly residues.

It belongs to the countin family.

It localises to the secreted. Functionally, cell-counting factor that limits the minimum size of the multicellular structure. May up-regulate the expression of both gp24 and gp80, which mediate cell adhesion. In Dictyostelium discoideum (Social amoeba), this protein is Countin-2 (ctnB).